A 348-amino-acid polypeptide reads, in one-letter code: Pyruvate dehydrogenase E1 component subunit alpha (348 aa).

Positions 1–21 (MAPRKSASVSSRKTAAKPAKK) are disordered.

As to quaternary structure, heterodimer of an alpha and a beta chain. Thiamine diphosphate serves as cofactor.

The enzyme catalyses N(6)-[(R)-lipoyl]-L-lysyl-[protein] + pyruvate + H(+) = N(6)-[(R)-S(8)-acetyldihydrolipoyl]-L-lysyl-[protein] + CO2. Functionally, the pyruvate dehydrogenase complex catalyzes the overall conversion of pyruvate to acetyl-CoA and CO(2). It contains multiple copies of three enzymatic components: pyruvate dehydrogenase (E1), dihydrolipoamide acetyltransferase (E2) and lipoamide dehydrogenase (E3). This is Pyruvate dehydrogenase E1 component subunit alpha (pdhA) from Rhizobium meliloti (strain 1021) (Ensifer meliloti).